The following is a 492-amino-acid chain: GlcNAc-binding protein A (492 aa).

The signal sequence occupies residues 1–23 (MNKSSTKTLIALSMMAVSSGVSA). Residues 24-204 (HGYVSETNDG…AFYNVIDVKF (181 aa)) enclose the Chitin-binding type-4 domain. The Chitin-binding type-3 domain occupies 443 to 484 (AGTKVLAEDGNVYQCKEFPYSGYCVQWTETATNFAPGVGSDW).

This sequence belongs to the GbpA family.

It is found in the secreted. Probably interacts with GlcNAc residues. May promote attachment to both epithelial cell surfaces and chitin. This is GlcNAc-binding protein A from Aliivibrio fischeri (strain ATCC 700601 / ES114) (Vibrio fischeri).